Reading from the N-terminus, the 251-residue chain is Malonyl-[acyl-carrier protein] O-methyltransferase (251 aa).

It belongs to the methyltransferase superfamily.

It carries out the reaction malonyl-[ACP] + S-adenosyl-L-methionine = malonyl-[ACP] methyl ester + S-adenosyl-L-homocysteine. It participates in cofactor biosynthesis; biotin biosynthesis. In terms of biological role, converts the free carboxyl group of a malonyl-thioester to its methyl ester by transfer of a methyl group from S-adenosyl-L-methionine (SAM). It allows to synthesize pimeloyl-ACP via the fatty acid synthetic pathway. The chain is Malonyl-[acyl-carrier protein] O-methyltransferase from Erwinia billingiae (strain Eb661).